Here is a 109-residue protein sequence, read N- to C-terminus: Nucleoid-associated protein BUsg_467 (109 aa).

The protein belongs to the YbaB/EbfC family. As to quaternary structure, homodimer.

The protein localises to the cytoplasm. Its subcellular location is the nucleoid. In terms of biological role, binds to DNA and alters its conformation. May be involved in regulation of gene expression, nucleoid organization and DNA protection. The protein is Nucleoid-associated protein BUsg_467 of Buchnera aphidicola subsp. Schizaphis graminum (strain Sg).